The following is a 161-amino-acid chain: MGNKIAVIPGTFDPITNGHLDIIERAAKIFDVLYVSVLNNSSKKPLFTVEERMEMIKQVTAHLPNVHVESASGLTVDYAAKRGATAIVRGLRAVSDFEYEMQIASMNRTLNADIETFFVMTNTKYSFLSSSMVKEVAQYQGDIRELVPEVVNKAVKAKFNK.

Residue threonine 11 coordinates substrate. ATP is bound by residues threonine 11–phenylalanine 12 and histidine 19. Substrate-binding residues include lysine 43, threonine 75, and arginine 89. Residues glycine 90–arginine 92, glutamate 100, and tyrosine 125–serine 131 contribute to the ATP site.

Belongs to the bacterial CoaD family. In terms of assembly, homohexamer. Mg(2+) is required as a cofactor.

It localises to the cytoplasm. It carries out the reaction (R)-4'-phosphopantetheine + ATP + H(+) = 3'-dephospho-CoA + diphosphate. Its pathway is cofactor biosynthesis; coenzyme A biosynthesis; CoA from (R)-pantothenate: step 4/5. In terms of biological role, reversibly transfers an adenylyl group from ATP to 4'-phosphopantetheine, yielding dephospho-CoA (dPCoA) and pyrophosphate. This is Phosphopantetheine adenylyltransferase from Listeria innocua serovar 6a (strain ATCC BAA-680 / CLIP 11262).